We begin with the raw amino-acid sequence, 183 residues long: Dual-action ribosomal maturation protein DarP (183 aa).

The protein belongs to the DarP family.

The protein resides in the cytoplasm. In terms of biological role, member of a network of 50S ribosomal subunit biogenesis factors which assembles along the 30S-50S interface, preventing incorrect 23S rRNA structures from forming. Promotes peptidyl transferase center (PTC) maturation. In Salmonella gallinarum (strain 287/91 / NCTC 13346), this protein is Dual-action ribosomal maturation protein DarP.